We begin with the raw amino-acid sequence, 323 residues long: Elongation factor P--(R)-beta-lysine ligase (323 aa).

Residue 76-78 (SPE) coordinates substrate. ATP-binding positions include 100 to 102 (RNE) and asparagine 109. Tyrosine 118 is a binding site for substrate. Residue 242–243 (EL) coordinates ATP. Glutamate 249 provides a ligand contact to substrate. Glycine 298 contacts ATP.

It belongs to the class-II aminoacyl-tRNA synthetase family. EpmA subfamily. Homodimer.

The catalysed reaction is D-beta-lysine + L-lysyl-[protein] + ATP = N(6)-((3R)-3,6-diaminohexanoyl)-L-lysyl-[protein] + AMP + diphosphate + H(+). With EpmB is involved in the beta-lysylation step of the post-translational modification of translation elongation factor P (EF-P). Catalyzes the ATP-dependent activation of (R)-beta-lysine produced by EpmB, forming a lysyl-adenylate, from which the beta-lysyl moiety is then transferred to the epsilon-amino group of a conserved specific lysine residue in EF-P. The protein is Elongation factor P--(R)-beta-lysine ligase of Haemophilus influenzae (strain ATCC 51907 / DSM 11121 / KW20 / Rd).